An 874-amino-acid chain; its full sequence is Pentatricopeptide repeat-containing protein At2g17140 (874 aa).

PPR repeat units lie at residues 111 to 145 (SVYLYNLLLESCIKERRVEFVSWLYKDMVLCGIAP), 146 to 180 (QTYTFNLLIRALCDSSCVDAARELFDEMPEKGCKP), 181 to 215 (NEFTFGILVRGYCKAGLTDKGLELLNAMESFGVLP), 216 to 250 (NKVIYNTIVSSFCREGRNDDSEKMVEKMREEGLVP), 251 to 285 (DIVTFNSRISALCKEGKVLDASRIFSDMELDEYLG), 290 to 320 (NSITYNLMLKGFCKVGLLEDAKTLFESIREN), 325 to 359 (SLQSYNIWLQGLVRHGKFIEAETVLKQMTDKGIGP), 360 to 394 (SIYSYNILMDGLCKLGMLSDAKTIVGLMKRNGVCP), 395 to 429 (DAVTYGCLLHGYCSVGKVDAAKSLLQEMMRNNCLP), 430 to 464 (NAYTCNILLHSLWKMGRISEAEELLRKMNEKGYGL), 465 to 499 (DTVTCNIIVDGLCGSGELDKAIEIVKGMRVHGSAA), 523 to 557 (DLITYSTLLNGLCKAGRFAEAKNLFAEMMGEKLQP), 558 to 592 (DSVAYNIFIHHFCKQGKISSAFRVLKDMEKKGCHK), 593 to 627 (SLETYNSLILGLGIKNQIFEIHGLMDEMKEKGISP), 628 to 662 (NICTYNTAIQYLCEGEKVEDATNLLDEMMQKNIAP), 663 to 693 (NVFSFKYLIEAFCKVPDFDMAQEVFETAVSI), 697 to 731 (KEGLYSLMFNELLAAGQLLKATELLEAVLDRGFEL), 732 to 766 (GTFLYKDLVESLCKKDELEVASGILHKMIDRGYGF), and 767 to 797 (DPAALMPVIDGLGKMGNKKEANSFADKMMEM).

Belongs to the PPR family. P subfamily.

This is Pentatricopeptide repeat-containing protein At2g17140 from Arabidopsis thaliana (Mouse-ear cress).